A 124-amino-acid polypeptide reads, in one-letter code: Large ribosomal subunit protein bL12 (124 aa).

Belongs to the bacterial ribosomal protein bL12 family. As to quaternary structure, homodimer. Part of the ribosomal stalk of the 50S ribosomal subunit. Forms a multimeric L10(L12)X complex, where L10 forms an elongated spine to which 2 to 4 L12 dimers bind in a sequential fashion. Binds GTP-bound translation factors.

Its function is as follows. Forms part of the ribosomal stalk which helps the ribosome interact with GTP-bound translation factors. Is thus essential for accurate translation. The protein is Large ribosomal subunit protein bL12 of Burkholderia cenocepacia (strain HI2424).